The following is a 439-amino-acid chain: C4-dicarboxylate transport protein (439 aa).

9 consecutive transmembrane segments (helical) span residues 9 to 29, 45 to 65, 77 to 97, 145 to 165, 185 to 205, 223 to 243, 290 to 310, 332 to 352, and 353 to 373; these read SLYA…HFLP, LIKM…IAGM, LALL…LIIV, AFAK…GFAL, VLFT…FGAM, LMGA…GIVT, VVGL…AIYL, TLLA…GSGF, and IVLA…LALI. Positions 417–439 are disordered; sequence NESPQAADQPEKILDQTNTKLGA.

This sequence belongs to the dicarboxylate/amino acid:cation symporter (DAACS) (TC 2.A.23) family.

It localises to the cell inner membrane. In terms of biological role, responsible for the transport of dicarboxylates such as succinate, fumarate, and malate from the periplasm across the membrane. The chain is C4-dicarboxylate transport protein from Janthinobacterium sp. (strain Marseille) (Minibacterium massiliensis).